We begin with the raw amino-acid sequence, 291 residues long: tRNA dimethylallyltransferase (291 aa).

9 to 16 (GTTASGKS) serves as a coordination point for ATP. Position 11 to 16 (11 to 16 (TASGKS)) interacts with substrate. Residues 34-37 (DSLA) are interaction with substrate tRNA.

It belongs to the IPP transferase family. Monomer. It depends on Mg(2+) as a cofactor.

It catalyses the reaction adenosine(37) in tRNA + dimethylallyl diphosphate = N(6)-dimethylallyladenosine(37) in tRNA + diphosphate. In terms of biological role, catalyzes the transfer of a dimethylallyl group onto the adenine at position 37 in tRNAs that read codons beginning with uridine, leading to the formation of N6-(dimethylallyl)adenosine (i(6)A). The chain is tRNA dimethylallyltransferase from Campylobacter concisus (strain 13826).